Here is a 383-residue protein sequence, read N- to C-terminus: Hydroxymethylglutaryl-CoA synthase (383 aa).

Asp-29 contributes to the (3S)-3-hydroxy-3-methylglutaryl-CoA binding site. The active-site Proton donor/acceptor is Glu-79. Positions 111, 152, 201, 233, 242, 275, and 308 each coordinate (3S)-3-hydroxy-3-methylglutaryl-CoA. Residue Cys-111 is the Acyl-thioester intermediate of the active site. His-233 serves as the catalytic Proton donor/acceptor.

This sequence belongs to the thiolase-like superfamily. HMG-CoA synthase family. In terms of assembly, homodimer.

It catalyses the reaction acetoacetyl-CoA + acetyl-CoA + H2O = (3S)-3-hydroxy-3-methylglutaryl-CoA + CoA + H(+). The protein operates within metabolic intermediate biosynthesis; (R)-mevalonate biosynthesis; (R)-mevalonate from acetyl-CoA: step 2/3. Its activity is regulated as follows. Is sensitive to feedback substrate inhibition by acetoacetyl-CoA. Is inactivated by hymeglusin, which also blocks the growth of E.faecalis, indicating the critical role that the mevalonate pathway plays in isoprenoid biosynthesis. Catalyzes the condensation of acetyl-CoA with acetoacetyl-CoA to form 3-hydroxy-3-methylglutaryl-CoA (HMG-CoA). Functions in the mevalonate (MVA) pathway leading to isopentenyl diphosphate (IPP), a key precursor for the biosynthesis of isoprenoid compounds. The chain is Hydroxymethylglutaryl-CoA synthase (mvaS) from Enterococcus faecalis (Streptococcus faecalis).